A 751-amino-acid polypeptide reads, in one-letter code: Cellulose synthase-like protein G3 (751 aa).

2 consecutive transmembrane segments (helical) span residues 47 to 67 and 72 to 92; these read IYAVFHTCGIIALMYHHVHSL and TTLITSLLLLSDIVLAFMWAT. Residues Asp-161 and Asp-466 contribute to the active site. The next 6 membrane-spanning stretches (helical) occupy residues 543–563, 577–597, 617–639, 674–694, 697–717, and 731–751; these read CWAFWSLPLIVYGFLPQLALL, FWLYIVLFLGAYGQDLLDFVL, FSSHLFGFIEFTLKTLNLSTHGF, TVAIVNLLAFVWGLYGLFAWG, LVLELMLASFAVVNCLPIYEA, and VCFVAGILTFVLIVSGYVFLK.

Belongs to the glycosyltransferase 2 family. Plant cellulose synthase-like G subfamily.

It is found in the golgi apparatus membrane. In terms of biological role, thought to be a Golgi-localized beta-glycan synthase that polymerize the backbones of noncellulosic polysaccharides (hemicelluloses) of plant cell wall. This Arabidopsis thaliana (Mouse-ear cress) protein is Cellulose synthase-like protein G3 (CSLG3).